A 345-amino-acid chain; its full sequence is Protein RecA (345 aa).

65 to 72 (GPESSGKT) is a binding site for ATP.

Belongs to the RecA family.

The protein resides in the cytoplasm. Can catalyze the hydrolysis of ATP in the presence of single-stranded DNA, the ATP-dependent uptake of single-stranded DNA by duplex DNA, and the ATP-dependent hybridization of homologous single-stranded DNAs. It interacts with LexA causing its activation and leading to its autocatalytic cleavage. This is Protein RecA from Campylobacter fetus subsp. fetus (strain 82-40).